We begin with the raw amino-acid sequence, 385 residues long: tRNA 2-selenouridine synthase (385 aa).

The Rhodanese domain maps to 15–138; it reads FIADTPLIDV…ARQFLISTID (124 aa). Cys98 acts as the S-selanylcysteine intermediate in catalysis.

This sequence belongs to the SelU family. Monomer.

The catalysed reaction is 5-methylaminomethyl-2-thiouridine(34) in tRNA + selenophosphate + (2E)-geranyl diphosphate + H2O + H(+) = 5-methylaminomethyl-2-selenouridine(34) in tRNA + (2E)-thiogeraniol + phosphate + diphosphate. It catalyses the reaction 5-methylaminomethyl-2-thiouridine(34) in tRNA + (2E)-geranyl diphosphate = 5-methylaminomethyl-S-(2E)-geranyl-thiouridine(34) in tRNA + diphosphate. It carries out the reaction 5-methylaminomethyl-S-(2E)-geranyl-thiouridine(34) in tRNA + selenophosphate + H(+) = 5-methylaminomethyl-2-(Se-phospho)selenouridine(34) in tRNA + (2E)-thiogeraniol. The enzyme catalyses 5-methylaminomethyl-2-(Se-phospho)selenouridine(34) in tRNA + H2O = 5-methylaminomethyl-2-selenouridine(34) in tRNA + phosphate. Functionally, involved in the post-transcriptional modification of the uridine at the wobble position (U34) of tRNA(Lys), tRNA(Glu) and tRNA(Gln). Catalyzes the conversion of 2-thiouridine (S2U-RNA) to 2-selenouridine (Se2U-RNA). Acts in a two-step process involving geranylation of 2-thiouridine (S2U) to S-geranyl-2-thiouridine (geS2U) and subsequent selenation of the latter derivative to 2-selenouridine (Se2U) in the tRNA chain. The protein is tRNA 2-selenouridine synthase of Nitrosomonas europaea (strain ATCC 19718 / CIP 103999 / KCTC 2705 / NBRC 14298).